Reading from the N-terminus, the 1019-residue chain is TOG array regulator of axonemal microtubules protein 2 (1019 aa).

4 disordered regions span residues 28 to 54 (AGPR…PEPR), 131 to 158 (RRLS…PLHS), 249 to 311 (TPSR…AKKP), and 991 to 1019 (SLGG…FQLD). The segment covering 1007 to 1019 (SKTTGSSYPFQLD) has biased composition (polar residues).

It belongs to the Crescerin family.

The polypeptide is TOG array regulator of axonemal microtubules protein 2 (Homo sapiens (Human)).